A 294-amino-acid chain; its full sequence is ATP phosphoribosyltransferase (294 aa).

It belongs to the ATP phosphoribosyltransferase family. Long subfamily. The cofactor is Mg(2+).

The protein resides in the cytoplasm. The catalysed reaction is 1-(5-phospho-beta-D-ribosyl)-ATP + diphosphate = 5-phospho-alpha-D-ribose 1-diphosphate + ATP. It participates in amino-acid biosynthesis; L-histidine biosynthesis; L-histidine from 5-phospho-alpha-D-ribose 1-diphosphate: step 1/9. Its activity is regulated as follows. Feedback inhibited by histidine. Catalyzes the condensation of ATP and 5-phosphoribose 1-diphosphate to form N'-(5'-phosphoribosyl)-ATP (PR-ATP). Has a crucial role in the pathway because the rate of histidine biosynthesis seems to be controlled primarily by regulation of HisG enzymatic activity. In Chlorobium phaeobacteroides (strain DSM 266 / SMG 266 / 2430), this protein is ATP phosphoribosyltransferase.